The sequence spans 90 residues: Small ribosomal subunit protein uS15c (90 aa).

Belongs to the universal ribosomal protein uS15 family. As to quaternary structure, part of the 30S ribosomal subunit.

The protein resides in the plastid. The protein localises to the chloroplast. The chain is Small ribosomal subunit protein uS15c (rps15) from Drimys granadensis.